The sequence spans 438 residues: Thymidine phosphorylase (438 aa).

This sequence belongs to the thymidine/pyrimidine-nucleoside phosphorylase family. As to quaternary structure, homodimer.

The enzyme catalyses thymidine + phosphate = 2-deoxy-alpha-D-ribose 1-phosphate + thymine. The protein operates within pyrimidine metabolism; dTMP biosynthesis via salvage pathway; dTMP from thymine: step 1/2. The enzymes which catalyze the reversible phosphorolysis of pyrimidine nucleosides are involved in the degradation of these compounds and in their utilization as carbon and energy sources, or in the rescue of pyrimidine bases for nucleotide synthesis. This Sinorhizobium medicae (strain WSM419) (Ensifer medicae) protein is Thymidine phosphorylase.